A 130-amino-acid polypeptide reads, in one-letter code: Small ribosomal subunit protein uS11c (130 aa).

This sequence belongs to the universal ribosomal protein uS11 family. As to quaternary structure, part of the 30S ribosomal subunit.

Its subcellular location is the plastid. It localises to the chloroplast. This Drimys granadensis protein is Small ribosomal subunit protein uS11c.